Consider the following 148-residue polypeptide: uncharacterized protein (148 aa).

This is an uncharacterized protein from Acanthamoeba polyphaga mimivirus (APMV).